An 81-amino-acid polypeptide reads, in one-letter code: ATP synthase subunit c (81 aa).

2 consecutive transmembrane segments (helical) span residues alanine 7–glycine 27 and leucine 57–alanine 77.

The protein belongs to the ATPase C chain family. As to quaternary structure, F-type ATPases have 2 components, F(1) - the catalytic core - and F(0) - the membrane proton channel. F(1) has five subunits: alpha(3), beta(3), gamma(1), delta(1), epsilon(1). F(0) has four main subunits: a(1), b(1), b'(1) and c(10-14). The alpha and beta chains form an alternating ring which encloses part of the gamma chain. F(1) is attached to F(0) by a central stalk formed by the gamma and epsilon chains, while a peripheral stalk is formed by the delta, b and b' chains.

The protein localises to the cellular thylakoid membrane. F(1)F(0) ATP synthase produces ATP from ADP in the presence of a proton or sodium gradient. F-type ATPases consist of two structural domains, F(1) containing the extramembraneous catalytic core and F(0) containing the membrane proton channel, linked together by a central stalk and a peripheral stalk. During catalysis, ATP synthesis in the catalytic domain of F(1) is coupled via a rotary mechanism of the central stalk subunits to proton translocation. Its function is as follows. Key component of the F(0) channel; it plays a direct role in translocation across the membrane. A homomeric c-ring of between 10-14 subunits forms the central stalk rotor element with the F(1) delta and epsilon subunits. The polypeptide is ATP synthase subunit c (Nostoc sp. (strain PCC 7120 / SAG 25.82 / UTEX 2576)).